Reading from the N-terminus, the 112-residue chain is Iron-sulfur cluster assembly protein CyaY (112 aa).

Belongs to the frataxin family.

In terms of biological role, involved in iron-sulfur (Fe-S) cluster assembly. May act as a regulator of Fe-S biogenesis. This is Iron-sulfur cluster assembly protein CyaY from Herminiimonas arsenicoxydans.